We begin with the raw amino-acid sequence, 383 residues long: Acetylornithine deacetylase (383 aa).

Zn(2+) is bound at residue H80. D82 is an active-site residue. Zn(2+) is bound at residue D112. E144 is a catalytic residue. Zn(2+)-binding residues include E145, E169, and H355.

Belongs to the peptidase M20A family. ArgE subfamily. Homodimer. Requires Zn(2+) as cofactor. It depends on Co(2+) as a cofactor. Glutathione is required as a cofactor.

The protein resides in the cytoplasm. It catalyses the reaction N(2)-acetyl-L-ornithine + H2O = L-ornithine + acetate. Its pathway is amino-acid biosynthesis; L-arginine biosynthesis; L-ornithine from N(2)-acetyl-L-ornithine (linear): step 1/1. Its function is as follows. Catalyzes the hydrolysis of the amide bond of N(2)-acetylated L-amino acids. Cleaves the acetyl group from N-acetyl-L-ornithine to form L-ornithine, an intermediate in L-arginine biosynthesis pathway, and a branchpoint in the synthesis of polyamines. This is Acetylornithine deacetylase from Escherichia coli O17:K52:H18 (strain UMN026 / ExPEC).